Consider the following 262-residue polypeptide: Apolipoprotein A-I (262 aa).

A signal peptide spans 1–18 (MKAVVLTLAVLFLTGSQA). Tandem repeats lie at residues 67 to 88 (LKLLDNWDTLASTLSKVREQLG) and 89 to 110 (PVTQEFWDNLEKETAALRQEMN). Residues 67 to 262 (LKLLDNWDTL…DEASKKLNAQ (196 aa)) are 10 X approximate tandem repeats. Residue M109 is modified to Methionine sulfoxide. A 3; half-length repeat occupies 111 to 121 (KDLEEVKQKVQ). Tandem repeats lie at residues 122-142 (PYLDEFQRKWHEEVEIYRQKV), 144-165 (PLGEEFREGARQKVQELQDRLS), 166-184 (PLAQELRDRARAHVEKQLA), 185-206 (PYSDDLRQRLTARLEALKEGGG), and 207-227 (SLAEYHAKATEQLKALGEKAK). Residues 228–238 (PALEDLRQGLM) form a 9; half-length repeat. M238 is subject to Methionine sulfoxide. Repeat 10 spans residues 239–262 (PVLESLKVSILAAIDEASKKLNAQ).

This sequence belongs to the apolipoprotein A1/A4/E family. Homodimer. Interacts with APOA1BP and CLU. Component of a sperm activating protein complex (SPAP), consisting of APOA1, an immunoglobulin heavy chain, an immunoglobulin light chain and albumin. Interacts with NDRG1. Interacts with SCGB3A2. Interacts with NAXE and YJEFN3. Post-translationally, glycosylated. In terms of processing, palmitoylated. Phosphorylation sites are present in the extracellular medium. In terms of tissue distribution, major protein of plasma HDL, also found in chylomicrons.

The protein localises to the secreted. Its function is as follows. Participates in the reverse transport of cholesterol from tissues to the liver for excretion by promoting cholesterol efflux from tissues and by acting as a cofactor for the lecithin cholesterol acyltransferase (LCAT). As part of the SPAP complex, activates spermatozoa motility. The chain is Apolipoprotein A-I (APOA1) from Pantholops hodgsonii (Chiru).